The sequence spans 241 residues: Phosphoribosylaminoimidazole-succinocarboxamide synthase (241 aa).

It belongs to the SAICAR synthetase family.

The catalysed reaction is 5-amino-1-(5-phospho-D-ribosyl)imidazole-4-carboxylate + L-aspartate + ATP = (2S)-2-[5-amino-1-(5-phospho-beta-D-ribosyl)imidazole-4-carboxamido]succinate + ADP + phosphate + 2 H(+). It participates in purine metabolism; IMP biosynthesis via de novo pathway; 5-amino-1-(5-phospho-D-ribosyl)imidazole-4-carboxamide from 5-amino-1-(5-phospho-D-ribosyl)imidazole-4-carboxylate: step 1/2. This chain is Phosphoribosylaminoimidazole-succinocarboxamide synthase (purC), found in Bacillus subtilis (strain 168).